The sequence spans 1026 residues: Beta-galactosidase (1026 aa).

Catalysis depends on glutamate 458, which acts as the Proton donor. The active-site Nucleophile is glutamate 546.

It belongs to the glycosyl hydrolase 2 family.

The catalysed reaction is Hydrolysis of terminal non-reducing beta-D-galactose residues in beta-D-galactosides.. The protein is Beta-galactosidase (lacZ) of Streptococcus thermophilus.